Reading from the N-terminus, the 445-residue chain is Amino-acid acetyltransferase (445 aa).

The region spanning glutamate 299–serine 438 is the N-acetyltransferase domain.

The protein belongs to the acetyltransferase family. ArgA subfamily.

The protein localises to the cytoplasm. The enzyme catalyses L-glutamate + acetyl-CoA = N-acetyl-L-glutamate + CoA + H(+). It participates in amino-acid biosynthesis; L-arginine biosynthesis; N(2)-acetyl-L-ornithine from L-glutamate: step 1/4. This chain is Amino-acid acetyltransferase, found in Vibrio atlanticus (strain LGP32) (Vibrio splendidus (strain Mel32)).